The following is a 232-amino-acid chain: Ribose-5-phosphate isomerase A (232 aa).

Substrate contacts are provided by residues 28-31, 83-86, and 96-99; these read TGST, DGAD, and KGGG. Catalysis depends on Glu105, which acts as the Proton acceptor. Lys123 is a substrate binding site.

Belongs to the ribose 5-phosphate isomerase family. As to quaternary structure, homodimer.

The catalysed reaction is aldehydo-D-ribose 5-phosphate = D-ribulose 5-phosphate. The protein operates within carbohydrate degradation; pentose phosphate pathway; D-ribose 5-phosphate from D-ribulose 5-phosphate (non-oxidative stage): step 1/1. Functionally, catalyzes the reversible conversion of ribose-5-phosphate to ribulose 5-phosphate. This chain is Ribose-5-phosphate isomerase A, found in Rhizobium etli (strain ATCC 51251 / DSM 11541 / JCM 21823 / NBRC 15573 / CFN 42).